The sequence spans 438 residues: Probable imidazolonepropionase (438 aa).

4-imidazolone-5-propanoate contacts are provided by tyrosine 159 and histidine 192. Tyrosine 159 serves as a coordination point for N-formimidoyl-L-glutamate. Histidine 260 lines the Fe(3+) pocket. Position 260 (histidine 260) interacts with Zn(2+). Position 263 (glutamate 263) interacts with 4-imidazolone-5-propanoate. A Fe(3+)-binding site is contributed by aspartate 334. Aspartate 334 is a binding site for Zn(2+). Asparagine 336 is an N-formimidoyl-L-glutamate binding site.

Belongs to the metallo-dependent hydrolases superfamily. HutI family. Zn(2+) is required as a cofactor. Requires Fe(3+) as cofactor.

It catalyses the reaction 4-imidazolone-5-propanoate + H2O = N-formimidoyl-L-glutamate. The protein operates within amino-acid degradation; L-histidine degradation into L-glutamate; N-formimidoyl-L-glutamate from L-histidine: step 3/3. This Xenopus laevis (African clawed frog) protein is Probable imidazolonepropionase (amdhd1).